We begin with the raw amino-acid sequence, 204 residues long: Molybdenum cofactor guanylyltransferase (204 aa).

GTP contacts are provided by residues 12–14, Lys-25, Asn-53, Asp-71, and Asp-101; that span reads LAG. A Mg(2+)-binding site is contributed by Asp-101.

Belongs to the MobA family. Monomer. Requires Mg(2+) as cofactor.

It is found in the cytoplasm. It carries out the reaction Mo-molybdopterin + GTP + H(+) = Mo-molybdopterin guanine dinucleotide + diphosphate. Functionally, transfers a GMP moiety from GTP to Mo-molybdopterin (Mo-MPT) cofactor (Moco or molybdenum cofactor) to form Mo-molybdopterin guanine dinucleotide (Mo-MGD) cofactor. The chain is Molybdenum cofactor guanylyltransferase from Ralstonia nicotianae (strain ATCC BAA-1114 / GMI1000) (Ralstonia solanacearum).